The primary structure comprises 390 residues: Protein snail (390 aa).

The interval 1–20 (MAANYKSCPLKKRPIVFVEE) is SNAG domain. Disordered stretches follow at residues 29-65 (ALTK…PKRD) and 162-191 (QSVY…DLSV). Polar residues-rich tracts occupy residues 32–43 (KDSQFAQDQPQD) and 162–172 (QSVYSYQQMTP). 5 consecutive C2H2-type zinc fingers follow at residues 245–267 (FKCD…RQFH), 280–302 (HSCE…IRTH), 306–328 (CKCP…IRTH), 334–356 (FQCP…QQTH), and 362–385 (YACQ…SSNC).

It belongs to the snail C2H2-type zinc-finger protein family.

It localises to the nucleus. Functionally, essential for the correct specification of ventral-dorsal patterns. This Drosophila melanogaster (Fruit fly) protein is Protein snail (sna).